Reading from the N-terminus, the 438-residue chain is Putative ZDHHC-type palmitoyltransferase 7 (438 aa).

N12 and N13 each carry an N-linked (GlcNAc...) asparagine glycan. Transmembrane regions (helical) follow at residues 48 to 68 (IFCLVHFIVYCVIIFRKGTIL) and 77 to 97 (YFYLIWTHCVFFFAIGTYFLI). 3 N-linked (GlcNAc...) asparagine glycosylation sites follow: N119, N144, and N157. The disordered stretch occupies residues 183–239 (EDSINDDTITTTTTTTTTTSTSTIPEISNDDDDNNNENNNDNVNNRNNNNSNGEKED). 2 stretches are compositionally biased toward low complexity: residues 190–206 (TITTTTTTTTTTSTSTI) and 218–234 (NENNNDNVNNRNNNNSN). An N-linked (GlcNAc...) asparagine glycan is attached at N231. The DHHC domain occupies 249–299 (YFCKKCLVDIPLRTKHCVKCNRCVLKYDHHCVFIGGCVGLNNHKNFLLFLL). 2 consecutive transmembrane segments (helical) span residues 294–314 (FLLFLLAESLLLLLGLRIIVT) and 330–350 (IAIIPPTLLIFGGLCMPFALF). Residue N360 is glycosylated (N-linked (GlcNAc...) asparagine).

It belongs to the DHHC palmitoyltransferase family.

Its subcellular location is the membrane. The enzyme catalyses L-cysteinyl-[protein] + hexadecanoyl-CoA = S-hexadecanoyl-L-cysteinyl-[protein] + CoA. The sequence is that of Putative ZDHHC-type palmitoyltransferase 7 from Dictyostelium discoideum (Social amoeba).